Consider the following 280-residue polypeptide: Large ribosomal subunit protein uL2 (280 aa).

Disordered regions lie at residues 27–58 (STPE…GGGH) and 226–280 (MNPV…KHGR). 2 stretches are compositionally biased toward basic residues: residues 37-58 (LHGH…GGGH) and 268-280 (IVRR…KHGR).

The protein belongs to the universal ribosomal protein uL2 family. In terms of assembly, part of the 50S ribosomal subunit. Forms a bridge to the 30S subunit in the 70S ribosome.

One of the primary rRNA binding proteins. Required for association of the 30S and 50S subunits to form the 70S ribosome, for tRNA binding and peptide bond formation. It has been suggested to have peptidyltransferase activity; this is somewhat controversial. Makes several contacts with the 16S rRNA in the 70S ribosome. The sequence is that of Large ribosomal subunit protein uL2 from Mycobacterium marinum (strain ATCC BAA-535 / M).